The sequence spans 142 residues: Hemoglobin subunit alpha-1 (142 aa).

The region spanning 2–142 (KLTAEDKHNV…VAYVLASKYR (141 aa)) is the Globin domain. O2 is bound at residue His-59. Residue His-88 coordinates heme b.

It belongs to the globin family. In terms of assembly, major hemoglobin is a heterotetramer of two alpha-1 chains and two beta-1 chains. As to expression, red blood cells.

In terms of biological role, involved in oxygen transport from the lung to the various peripheral tissues. The sequence is that of Hemoglobin subunit alpha-1 from Pleurodeles waltl (Iberian ribbed newt).